A 615-amino-acid chain; its full sequence is 1-deoxy-D-xylulose-5-phosphate synthase (615 aa).

Residues histidine 76 and 117–119 (GHS) each bind thiamine diphosphate. Residue aspartate 148 coordinates Mg(2+). Thiamine diphosphate-binding positions include 149 to 150 (GA), asparagine 177, tyrosine 284, and glutamate 365. Residue asparagine 177 coordinates Mg(2+).

The protein belongs to the transketolase family. DXPS subfamily. As to quaternary structure, homodimer. It depends on Mg(2+) as a cofactor. The cofactor is thiamine diphosphate.

The enzyme catalyses D-glyceraldehyde 3-phosphate + pyruvate + H(+) = 1-deoxy-D-xylulose 5-phosphate + CO2. It functions in the pathway metabolic intermediate biosynthesis; 1-deoxy-D-xylulose 5-phosphate biosynthesis; 1-deoxy-D-xylulose 5-phosphate from D-glyceraldehyde 3-phosphate and pyruvate: step 1/1. In terms of biological role, catalyzes the acyloin condensation reaction between C atoms 2 and 3 of pyruvate and glyceraldehyde 3-phosphate to yield 1-deoxy-D-xylulose-5-phosphate (DXP). In Francisella tularensis subsp. holarctica (strain FTNF002-00 / FTA), this protein is 1-deoxy-D-xylulose-5-phosphate synthase.